A 396-amino-acid polypeptide reads, in one-letter code: NADH-quinone oxidoreductase subunit D (396 aa).

This sequence belongs to the complex I 49 kDa subunit family. NDH-1 is composed of 14 different subunits. Subunits NuoB, C, D, E, F, and G constitute the peripheral sector of the complex.

It is found in the cell inner membrane. It carries out the reaction a quinone + NADH + 5 H(+)(in) = a quinol + NAD(+) + 4 H(+)(out). In terms of biological role, NDH-1 shuttles electrons from NADH, via FMN and iron-sulfur (Fe-S) centers, to quinones in the respiratory chain. The immediate electron acceptor for the enzyme in this species is believed to be ubiquinone. Couples the redox reaction to proton translocation (for every two electrons transferred, four hydrogen ions are translocated across the cytoplasmic membrane), and thus conserves the redox energy in a proton gradient. The chain is NADH-quinone oxidoreductase subunit D from Methylorubrum extorquens (strain PA1) (Methylobacterium extorquens).